The sequence spans 1363 residues: ABC multidrug transporter MDR2 (1363 aa).

A helical transmembrane segment spans residues 65-85; it reads IALIVIGTIAGIGAGIPFPLL. The region spanning 69-367 is the ABC transmembrane type-1 1 domain; it reads VIGTIAGIGA…MAPFMHIFAS (299 aa). Residue Asn97 is glycosylated (N-linked (GlcNAc...) asparagine). Transmembrane regions (helical) follow at residues 119 to 139, 193 to 213, 215 to 235, 301 to 321, and 336 to 356; these read VLQV…HTGC, KVGL…VAFL, VATI…MAFG, IQFG…FWQG, and VSVG…FVLS. Residues 403 to 682 form the ABC transporter 1 domain; sequence IELQDVTFNY…DGVYAGMVRL (280 aa). ATP is bound at residue 438–445; the sequence is GTSGSGKS. Residues Asn552 and Asn633 are each glycosylated (N-linked (GlcNAc...) asparagine). Residues 738–758 are disordered; sequence YMPEEADSLPTEPENEKEKPK. 3 helical membrane passes run 781–801, 820–840, and 896–916; these read LGLI…VIFG, GMLF…AVIV, and LTGT…AGVI. The 272-residue stretch at 781–1052 folds into the ABC transmembrane type-1 2 domain; it reads LGLITSIMIG…MFALVPDISK (272 aa). N-linked (GlcNAc...) asparagine glycosylation is present at Asn973. 2 helical membrane-spanning segments follow: residues 992-1012 and 1016-1036; these read FWLS…YWWG and ILAG…LLFS. The ABC transporter 2 domain occupies 1119-1358; that stretch reads VQFRNVHFRY…CESYRANVIH (240 aa). 1154–1161 is a binding site for ATP; sequence GPSGSGKS.

Belongs to the ABC transporter superfamily. ABCB family. Multidrug resistance exporter (TC 3.A.1.201) subfamily.

The protein resides in the cell membrane. Its function is as follows. Pleiotropic ABC efflux transporter that may be involved in the modulation susceptibility to a wide range of unrelated cytotoxic compounds. This is ABC multidrug transporter MDR2 from Trichophyton tonsurans (strain CBS 112818) (Scalp ringworm fungus).